Reading from the N-terminus, the 607-residue chain is V-type proton ATPase catalytic subunit A (607 aa).

251–258 is an ATP binding site; sequence GAFGCGKT.

It belongs to the ATPase alpha/beta chains family. As to quaternary structure, V-ATPase is a heteromultimeric enzyme composed of a peripheral catalytic V1 complex (components A to H) attached to an integral membrane V0 proton pore complex (components: a, c, c', c'', d, e, f and VOA1).

The protein localises to the vacuole membrane. It carries out the reaction ATP + H2O + 4 H(+)(in) = ADP + phosphate + 5 H(+)(out). Its function is as follows. Catalytic subunit of the V1 complex of vacuolar(H+)-ATPase (V-ATPase), a multisubunit enzyme composed of a peripheral complex (V1) that hydrolyzes ATP and a membrane integral complex (V0) that translocates protons. V-ATPase is responsible for acidifying and maintaining the pH of intracellular compartments. In Encephalitozoon cuniculi (strain GB-M1) (Microsporidian parasite), this protein is V-type proton ATPase catalytic subunit A (VMA1).